Reading from the N-terminus, the 338-residue chain is 1-aminocyclopropane-1-carboxylate deaminase (338 aa).

An N6-(pyridoxal phosphate)lysine modification is found at Lys51. The Nucleophile role is filled by Ser78.

The protein belongs to the ACC deaminase/D-cysteine desulfhydrase family. In terms of assembly, homotrimer. It depends on pyridoxal 5'-phosphate as a cofactor.

The catalysed reaction is 1-aminocyclopropane-1-carboxylate + H2O = 2-oxobutanoate + NH4(+). Catalyzes a cyclopropane ring-opening reaction, the irreversible conversion of 1-aminocyclopropane-1-carboxylate (ACC) to ammonia and alpha-ketobutyrate. Allows growth on ACC as a nitrogen source. This Burkholderia ambifaria (strain ATCC BAA-244 / DSM 16087 / CCUG 44356 / LMG 19182 / AMMD) (Burkholderia cepacia (strain AMMD)) protein is 1-aminocyclopropane-1-carboxylate deaminase.